Here is a 389-residue protein sequence, read N- to C-terminus: Lipid-A-disaccharide synthase (389 aa).

It belongs to the LpxB family.

The catalysed reaction is a lipid X + a UDP-2-N,3-O-bis[(3R)-3-hydroxyacyl]-alpha-D-glucosamine = a lipid A disaccharide + UDP + H(+). The protein operates within bacterial outer membrane biogenesis; LPS lipid A biosynthesis. Condensation of UDP-2,3-diacylglucosamine and 2,3-diacylglucosamine-1-phosphate to form lipid A disaccharide, a precursor of lipid A, a phosphorylated glycolipid that anchors the lipopolysaccharide to the outer membrane of the cell. The polypeptide is Lipid-A-disaccharide synthase (Burkholderia ambifaria (strain ATCC BAA-244 / DSM 16087 / CCUG 44356 / LMG 19182 / AMMD) (Burkholderia cepacia (strain AMMD))).